A 474-amino-acid chain; its full sequence is 15-cis-phytoene desaturase (474 aa).

The protein belongs to the carotenoid/retinoid oxidoreductase family.

Its subcellular location is the cell membrane. The enzyme catalyses 2 a plastoquinone + 15-cis-phytoene = 9,9',15-tri-cis-zeta-carotene + 2 a plastoquinol. The protein operates within carotenoid biosynthesis; lycopene biosynthesis. Its activity is regulated as follows. Inhibited by the herbicide norflurazon in a non-competitive way. Its function is as follows. This enzyme converts phytoene into zeta-carotene via the intermediary of phytofluene by the symmetrical introduction of two double bonds at the C-11 and C-11' positions of phytoene. Also active with phytofluene and 1,2-epoxyphytoene as substrates. This chain is 15-cis-phytoene desaturase (pds), found in Synechococcus elongatus (strain ATCC 33912 / PCC 7942 / FACHB-805) (Anacystis nidulans R2).